The following is a 355-amino-acid chain: F-box only protein 32 (355 aa).

Residues 62–67 carry the Nuclear localization signal motif; the sequence is KKRKKD. The Nuclear export signal signature appears at 169–173; that stretch reads LLQTL. Residues 223 to 271 form the F-box domain; that stretch reads LTFTDLPLCLQLNIMQRLSDGRDLVSLGQAAPDLHVLSEDRLLWKKLCQ. The Bipartite nuclear localization signal signature appears at 280 to 295; the sequence is RKRLILSDKGQLDWKK.

As to quaternary structure, part of the SCF (SKP1-CUL1-F-box) E3 ubiquitin-protein ligase complex SCF(FBXO32) formed of CUL1, SKP1, RBX1 and FBXO32. As to expression, specifically expressed in cardiac and skeletal muscle.

Its subcellular location is the cytoplasm. The protein resides in the nucleus. Its pathway is protein modification; protein ubiquitination. In terms of biological role, substrate recognition component of a SCF (SKP1-CUL1-F-box protein) E3 ubiquitin-protein ligase complex which mediates the ubiquitination and subsequent proteasomal degradation of target proteins. Probably recognizes and binds to phosphorylated target proteins during skeletal muscle atrophy. Recognizes TERF1. In Homo sapiens (Human), this protein is F-box only protein 32 (FBXO32).